The chain runs to 501 residues: GDP-fucose protein O-fucosyltransferase 4 (501 aa).

Over 1–10 the chain is Cytoplasmic; sequence MLLQMAGRGK. Residues 11 to 31 traverse the membrane as a helical; Signal-anchor for type II membrane protein segment; sequence MVPCVCLGLLGVLCWVWVSFA. The Lumenal portion of the chain corresponds to 32 to 501; it reads SFPDEQLSLG…MAVRRARGKN (470 aa). Asparagine 173 carries an N-linked (GlcNAc...) asparagine glycan. A disulfide bond links cysteine 396 and cysteine 399. 2 N-linked (GlcNAc...) asparagine glycosylation sites follow: asparagine 428 and asparagine 478.

It belongs to the glycosyltransferase 10 family.

The protein localises to the endoplasmic reticulum membrane. The catalysed reaction is L-threonyl-[protein] + GDP-beta-L-fucose = 3-O-(alpha-L-fucosyl)-L-threonyl-[protein] + GDP + H(+). It catalyses the reaction L-seryl-[protein] + GDP-beta-L-fucose = 3-O-(alpha-L-fucosyl)-L-seryl-[protein] + GDP + H(+). It participates in protein modification; protein glycosylation. Its function is as follows. Protein O-fucosyltransferase that specifically catalyzes O-fucosylation of serine or threonine residues in EMI domains of target proteins. Attaches fucose through an O-glycosidic linkage. O-fucosylation of EMI domain-containing proteins may be required for facilitating protein folding and secretion. The polypeptide is GDP-fucose protein O-fucosyltransferase 4 (fut11) (Takifugu rubripes (Japanese pufferfish)).